The sequence spans 535 residues: Transmembrane protein 151 homolog (535 aa).

3 helical membrane passes run 27–47 (GYGK…YATY), 73–93 (YNFV…MECW), and 254–274 (PWFL…SWPL). The disordered stretch occupies residues 498-535 (ASISHSSSKDLKSLTLKNNNGAANNNNNNNNENPEEQP). Residues 510–529 (SLTLKNNNGAANNNNNNNNE) are compositionally biased toward low complexity.

The protein belongs to the TMEM151 family.

Its subcellular location is the membrane. This is Transmembrane protein 151 homolog from Caenorhabditis briggsae.